Reading from the N-terminus, the 1183-residue chain is DNA-directed RNA polymerase subunit beta (1183 aa).

Belongs to the RNA polymerase beta chain family. In terms of assembly, the RNAP catalytic core consists of 2 alpha, 1 beta, 1 beta' and 1 omega subunit. When a sigma factor is associated with the core the holoenzyme is formed, which can initiate transcription.

The enzyme catalyses RNA(n) + a ribonucleoside 5'-triphosphate = RNA(n+1) + diphosphate. DNA-dependent RNA polymerase catalyzes the transcription of DNA into RNA using the four ribonucleoside triphosphates as substrates. This is DNA-directed RNA polymerase subunit beta from Staphylococcus aureus (strain Mu50 / ATCC 700699).